Reading from the N-terminus, the 2568-residue chain is MAPQNNGYPEPIAIVGMACRLPGEVTSPSKLWDLLVEERSAQSDVPSNRFNVDSWYHPDKTRPGSISTRGGYFLSEDDSYRQFDPFFFGINPKEAASMDPQQRKLLEVVYESFEAAGARLEDVSGSKTACYVGNFTWDIGQMQARDVNHGAPYHMTGGGLTILSNRVNYVFNLKGPSMTIDTACSSTMYALHLACRSLQAGDCSAAIVAGTNLIFGIEQQIGSVRLGVLSPTSACHTFDESADGYARAEAVGSLYLKTLSQAIADGDPIRAIVRGTSINANGKSPGISHPSAQDQEMVIRKAYASAGLDLDQTGYFECHGTGTPVGDPLEVSAIGNVFGNVRTAENPLLMGSVKTNLGHGEAASAISSLIKTILCLEKGEIPATIGIKRLNPDLNLRDGRLKIVQTRSPWPAAQHYLRASVNSFGYGGANAHAILDAVQSYLGDVYQSIPASLPAPEKSASKKYLLLPFSAHSEPTLERNIETISHSFKSGSFSLPDLAHTLGSRRSNHSVRAFGLVSGDADGPQLVDSLRPSKLTVGTAAGASPKLAFIFTGQGAQWAQMGYELVQEYAVVRQTLQDLGRTISKLPNAPDWDLLEALAQPKTKSRVNEAELSQPLTTAVQIAMVDLLRSWGVHPTAVAGHSSGEIAAAYTAGLISAAEAIIIAYQRGAATVKSTQQGAMLAVGQGPEEVLQVIQDIPGVGIACYNAPDSVTLSGTEKAIDEARGRFARAGVFNRKLITSGNAYHSELMTEAGTYYETFLKTCLLPNDPPSTGHASVTMFSSVTEEELSTIELDYWRKNLESPVRFDQATQKLLKQRPEVNVVVEIGPHSALAAPLKAIRTSVGYSPERLVYLSALKRNADSVESMLKLAGSLFLSGWPLDLSTVNADETVYQDETGAERIQYSHGSFIKDLPTYQWTYDEDFLWNESRLSTDIRFRSYPHHDLLGSRLPGTSNAAPAWRNLLSLDQVPWLRDHKVGEDIVFPAAGYVALAVEAVTQIRGSTVTTVDDAYTLRDVNITSAMVLKEGLSTELMFDLFAVTGQPATYQFSVTTVSQGTWTQHATGSVLIDSKNTNDQLLWPDDRNVGSRGGVNKDSYDRRWYAAMDKVGLIYGPGFKTLADIRASPEHLQATAEVSRTATDGLMGHQSEYMLHPTTIDACLQLSIIAAHHGKPESLNKVYLPVAIRKLTIRPQKDSGGVIPLAACGRGHHRGLRSVQTFIDLSSPSNRSLLQAEISFSSLETASSDTVTSKSPQPYTRLVWKPDFDRMSNAEANALFHGTQEDMSASRHFFSELEKVTRLAIRSSAERLPENLQTDHLPAHMHKFLAWLKTEGQALASSEGHDGLTGKDLMEEINSIARNVAHTVPEAAMVAQLNSRMPEIVSGTVGALDVMVEDDLMSKIYEDGFGQVGAYAKLSSVMELVAHKDPSLRILELGAGTGGATKPMLQALQGDTPLPKYAKYDFTDVSKAFLGVAQDKFEGYRNLDFGILDIEQDPAAQGFEEGSYDIVFASNVIHATRNVASSLSHCRRLLKPNGKLMIIETTKQRQVTGFMLGTLPGYWLGADDGRPSSPFLSKALWHQRLLDAGLSGADVVLDDYPEPADCTTLMVSRNVGDAVEHTSMNGTHGVNGVNGFHETNGQNGLNGANGVKSPLVTLIYRNTPQPFQQALEQKYAQLGISTRSMALLDVPTSLERDSRTVMLGELESPLMARMTPDEMHAIQRYTQLAATAIWVTNIDVLQGRDAEKSLVFGLAKSIMTEQPSFHLCSVDVDIYDGKTDYEHSSKLIVETEMAFHDDPNGDLDTELVEKDGLVYISRYVTDDAENANFERHLAIKPTMSSFSESDSSNYSLEFEKVGRLDSFYFKEHSLKALGEHEVLLDIEAAPLDELSIPTLKGQASSSCFGLVMAGTVRAVGPKASKLKKGDRVCCLHPHHFDTAVIVDERVCELLSAHERSEDLISQIHPVVVSLHIVETLLRLRTGDRVLIDCRQAYLAYAIAQVALLAGSTVQVTFNSEPGRGFLQNLGDNAHLVDRRAGFNDSLVGSSFDAIITDAKEGYQLFCESLTYGGRITVLANGAPGDMASAAVSFLNKGTTVGMFDPIDGFANVPLQHSSLVTKALDLLRHNTIRPLPSTQYDLSSFTDAVGHISQEDSVGLAVLTRTSNTAVPIHTVTQPLEFNSQASYLLIGCLGGLGRSLTTWMVSRGARHFVFLSRSGADKPEAAALVQELGELTRTRYYDLTVQVVRGDVSSKEDVSRAIACAKQPIKGVVQAAMVLKDTLFTEMTLGQFNQVLHPKMLGTIHLHELLQDHDLDFFVMTSSVLGAIGAAMQSNYSAANAFLDHMARYRQSQGQQATSIALGMILDVGHVEEHPEVEKALKRNGMYGISVDEYLLMMEFACRRRDLSASARKEGPFKYDPCASAHIVTGMDPTRVSRAGGKSLWLKDNRLRNLVAALGGGSEGEDALNAKQSAGTSTRELLDAARAEGGEAAVKSAILGLILARFSKLVLLPVAKIDPGKSLAHYGMDSMISAELKSWAWREFTVDLPFLGLLDQGLTFDGLADQVVSLAETRSS.

A Ketosynthase family 3 (KS3) domain is found at 9–437 (PEPIAIVGMA…GANAHAILDA (429 aa)). Residues C184, H319, and H359 each act as for beta-ketoacyl synthase activity in the active site. In terms of domain architecture, Malonyl-CoA:ACP transacylase (MAT) spans 549 to 877 (FIFTGQGAQW…KLAGSLFLSG (329 aa)). The N-terminal hotdog fold stretch occupies residues 942-1081 (HDLLGSRLPG…TNDQLLWPDD (140 aa)). In terms of domain architecture, PKS/mFAS DH spans 942-1244 (HDLLGSRLPG…FSSLETASSD (303 aa)). H974 functions as the Proton acceptor; for dehydratase activity in the catalytic mechanism. Positions 1091–1244 (NKDSYDRRWY…FSSLETASSD (154 aa)) are C-terminal hotdog fold. The active-site Proton donor; for dehydratase activity is D1156. The tract at residues 1295–1595 (VTRLAIRSSA…SGADVVLDDY (301 aa)) is methyltransferase (CMet) domain. The region spanning 1853–2154 (GRLDSFYFKE…QEDSVGLAVL (302 aa)) is the Enoyl reductase (ER) domain. Residues 2177–2357 (ASYLLIGCLG…QATSIALGMI (181 aa)) form the Ketoreductase (KR) domain. The Carrier domain maps to 2485–2563 (AVKSAILGLI…GLADQVVSLA (79 aa)). Residue S2522 is modified to O-(pantetheine 4'-phosphoryl)serine.

Requires pantetheine 4'-phosphate as cofactor.

Its pathway is antifungal biosynthesis. In terms of biological role, highly reducing polyketide synthase; part of the gene cluster that mediates the biosynthesis of the tetrahydropyranyl antifungal agent restricticin that acts as an inhibitor of CYP51 and blocks the ergosterol biosynthesis. The highly reducing polyketide synthase resH, the short chain dehydrogenase resG, the cyclase resF, the FAD-dependent monooxygenase resA and the enoylreductase resD are required to generate the first stable intermediate desmethylrestrictinol. ResH with resD biosynthesize the first polyketide chain intermediate that is reduced by resG, followed by epoxidation by resA before 6-endo cyclization via epoxide opening by resF leads to desmethylrestrictinol. The methyltransferase resE then catalyzes the C4 O-methylation of desmethylrestrictinol to produce restrictinol, and the nonribosomal peptide synthetase resC catalyzes the C3 esterification of restrictinol with glycine that leads to restricticin. In Aspergillus sclerotiorum, this protein is Highly reducing polyketide synthase resH.